Reading from the N-terminus, the 336-residue chain is GTPase Obg (336 aa).

Residues 1 to 159 (MKFIDEATII…RRLQLELILL (159 aa)) form the Obg domain. One can recognise an OBG-type G domain in the interval 160 to 333 (ADVGLLGLPN…LCRDIMLFIN (174 aa)). Residues 166 to 173 (GLPNVGKS), 191 to 195 (FTTLV), 213 to 216 (DIPG), 283 to 286 (NKLD), and 314 to 316 (SAM) contribute to the GTP site. Residues serine 173 and threonine 193 each coordinate Mg(2+).

It belongs to the TRAFAC class OBG-HflX-like GTPase superfamily. OBG GTPase family. In terms of assembly, monomer. It depends on Mg(2+) as a cofactor.

The protein localises to the cytoplasm. Its function is as follows. An essential GTPase which binds GTP, GDP and possibly (p)ppGpp with moderate affinity, with high nucleotide exchange rates and a fairly low GTP hydrolysis rate. Plays a role in control of the cell cycle, stress response, ribosome biogenesis and in those bacteria that undergo differentiation, in morphogenesis control. The chain is GTPase Obg from Baumannia cicadellinicola subsp. Homalodisca coagulata.